A 66-amino-acid chain; its full sequence is Stress-associated endoplasmic reticulum protein 1 (66 aa).

A disordered region spans residues 1-31; that stretch reads MVAKQRIRMANEKHSKNITQRGNVAKTSRNA. The span at 17 to 30 shows a compositional bias: polar residues; the sequence is NITQRGNVAKTSRN. The helical transmembrane segment at 39-59 threads the bilayer; sequence GPWLLALFIFVVCGSAIFQII.

Belongs to the RAMP4 family. In terms of assembly, interacts with SEC61B, SEC61A1 and the SEC61 complex. Interacts with CANX.

The protein localises to the membrane. It localises to the endoplasmic reticulum membrane. Its function is as follows. Interacts with target proteins during their translocation into the lumen of the endoplasmic reticulum. Protects unfolded target proteins against degradation during ER stress. May facilitate glycosylation of target proteins after termination of ER stress. May modulate the use of N-glycosylation sites on target proteins. The chain is Stress-associated endoplasmic reticulum protein 1 (SERP1) from Bos taurus (Bovine).